The chain runs to 388 residues: Succinate--CoA ligase [ADP-forming] subunit beta (388 aa).

The region spanning 9–245 (KELLAKYGLP…KSQENERELK (237 aa)) is the ATP-grasp domain. Residues Lys46, 53–55 (GRG), Glu100, Tyr103, and Glu108 each bind ATP. Mg(2+) contacts are provided by Asn200 and Asp214. Substrate-binding positions include Asn265 and 322-324 (GIV).

It belongs to the succinate/malate CoA ligase beta subunit family. As to quaternary structure, heterotetramer of two alpha and two beta subunits. The cofactor is Mg(2+).

It catalyses the reaction succinate + ATP + CoA = succinyl-CoA + ADP + phosphate. The enzyme catalyses GTP + succinate + CoA = succinyl-CoA + GDP + phosphate. Its pathway is carbohydrate metabolism; tricarboxylic acid cycle; succinate from succinyl-CoA (ligase route): step 1/1. In terms of biological role, succinyl-CoA synthetase functions in the citric acid cycle (TCA), coupling the hydrolysis of succinyl-CoA to the synthesis of either ATP or GTP and thus represents the only step of substrate-level phosphorylation in the TCA. The beta subunit provides nucleotide specificity of the enzyme and binds the substrate succinate, while the binding sites for coenzyme A and phosphate are found in the alpha subunit. The protein is Succinate--CoA ligase [ADP-forming] subunit beta of Laribacter hongkongensis (strain HLHK9).